A 735-amino-acid chain; its full sequence is MIP-related peptides (735 aa).

A signal peptide spans 1-20; it reads MCTRPGLAALLVLMTSCASS. A propeptide spanning residues 21–135 is cleaved from the precursor; sequence FSRADTQSAS…EDSDTKVDTR (115 aa). The segment covering 33–65 has biased composition (low complexity); that stretch reads ALSAASADAQAARQQQEQHLVAQQQQQQQQQQQ. Disordered regions lie at residues 33–212 and 229–251; these read ALSA…FGKK and FGKKSSGESAGDSGYISVASRGS. Composition is skewed to polar residues over residues 66 to 76 and 101 to 125; these read HSNNNEPQQRA and PVSQPDLSPDFSNPMGSSLSQSGTP. Phenylalanine amide occurs at positions 142, 153, and 164. The span at 142 to 159 shows a compositional bias: basic residues; the sequence is FGKKRGQAPRFFGKKRAM. A propeptide spanning residues 168 to 184 is cleaved from the precursor; it reads SSEFPTSNSEQLALDTR. Residue Phe190 is modified to Phenylalanine amide. The propeptide occupies 194–203; sequence SFPESNREQR. Residues 194 to 204 are compositionally biased toward basic and acidic residues; it reads SFPESNREQRG. Phe209 and Phe229 each carry phenylalanine amide. Residues 214–229 constitute a propeptide, linker peptide; it reads FDENVDIDERAAPRFF. A propeptide spanning residues 233–249 is cleaved from the precursor; it reads SSGESAGDSGYISVASR. Phe255 carries the phenylalanine amide modification. A propeptide spans 259-267 (linker peptide); it reads QDDDIMIAA. The residue at position 274 (Phe274) is a Phenylalanine amide. The propeptide at 279 to 287 is linker peptide; the sequence is SDDNVALDL. Phe294 carries the phenylalanine amide modification. A propeptide spanning residues 298–311 is cleaved from the precursor; the sequence is QSSDLDDEISVALR. The residue at position 317 (Phe317) is a Phenylalanine amide. Positions 321–332 are excised as a propeptide; that stretch reads RADDEDILLGER. Phe338 bears the Phenylalanine amide mark. A propeptide spanning residues 342–353 is cleaved from the precursor; sequence RANDENISFSLR. Disordered stretches follow at residues 352-373 and 381-400; these read LRGSPRFFGKKRSDESDDDNIG and RFFGKKRSDETDDENIGLMA. Residue Phe359 is modified to Phenylalanine amide. Residues 363–377 constitute a propeptide that is removed on maturation; sequence RSDESDDDNIGLVAR. Phe383 is modified (phenylalanine amide). The propeptide occupies 387-401; it reads RSDETDDENIGLMAR. The residue at position 407 (Phe407) is a Phenylalanine amide. A propeptide spans 412–426 (linker peptide); sequence SDGLDDGGNIIDVAT. Positions 430–464 are disordered; that stretch reads PRFFGKKRSNSDSSDKSSDSALSSSESGRQTRQAP. Phe433 is modified (phenylalanine amide). Residues 437-461 constitute a propeptide that is removed on maturation; sequence RSNSDSSDKSSDSALSSSESGRQTR. A compositionally biased stretch (basic and acidic residues) spans 438–447; sequence SNSDSSDKSS. Gln462 carries the pyrrolidone carboxylic acid modification. Phe467 carries the phenylalanine amide modification. The propeptide occupies 471 to 493; the sequence is YVDEHHVSKRAAATAFPLIIEAR. At Gln494 the chain carries Pyrrolidone carboxylic acid. The residue at position 499 (Phe499) is a Phenylalanine amide. The propeptide occupies 503-509; sequence EYRYPPR. Ile515 is modified (isoleucine amide). Residues 519–546 constitute a propeptide that is removed on maturation; it reads FSLYRSPGKYSLSSPYMSAKEFKETFRR. At Met552 the chain carries Methionine amide. Positions 556–585 are excised as a propeptide; that stretch reads TAELNEEGSDDFTNDDTDDENEYDETVLFK. Val592 is subject to Valine amide. Leu601 carries the post-translational modification Leucine amide. Residue Ile610 is modified to Isoleucine amide. A Valine amide modification is found at Val619. An Isoleucine amide modification is found at Ile628. Positions 632-661 are cleaved as a propeptide — linker peptide; that stretch reads DLDWYQKALCAEADILELDDCADFLGNDDV. At Gln664 the chain carries Pyrrolidone carboxylic acid. At Ile669 the chain carries Isoleucine amide. Positions 674–705 are cleaved as a propeptide — linker peptide; sequence GEDVSERDYAQLLEALSRLQAIKQIKARIQNE. Val714 carries the post-translational modification Valine amide. Residues 715–735 constitute a propeptide that is removed on maturation; it reads GRRSEYNLGPFDEFVDESMER.

Expressed in the CNS and peripheral tissues (the digestive tract, vasculature, and the reproductive organs).

It localises to the secreted. In terms of biological role, has some structural and functional features similar to vertebrate opioid peptides. AMRPs are inhibitory on Aplysia esophagus, penis retractor muscle, and body wall muscle. In Aplysia californica (California sea hare), this protein is MIP-related peptides (MRP).